The chain runs to 173 residues: U1 small nuclear ribonucleoprotein C (173 aa).

The Matrin-type zinc finger occupies 4 to 36 (YYCDYCDTYLTHDSPSVRKTHCQGRKHKDNVKF). Positions 72–100 (AAIPPPANMQGPPRPVPPGPMGPGPNMLG) are disordered. Residues 73–94 (AIPPPANMQGPPRPVPPGPMGP) show a composition bias toward pro residues.

Belongs to the U1 small nuclear ribonucleoprotein C family. In terms of assembly, U1 snRNP is composed of the 7 core Sm proteins B/B', D1, D2, D3, E, F and G that assemble in a heptameric protein ring on the Sm site of the small nuclear RNA to form the core snRNP, and at least 3 U1 snRNP-specific proteins U1-70K, U1-A and U1-C. U1-C interacts with U1 snRNA and the 5' splice-site region of the pre-mRNA.

It is found in the nucleus. Functionally, component of the spliceosomal U1 snRNP, which is essential for recognition of the pre-mRNA 5' splice-site and the subsequent assembly of the spliceosome. U1-C is directly involved in initial 5' splice-site recognition for both constitutive and regulated alternative splicing. The interaction with the 5' splice-site seems to precede base-pairing between the pre-mRNA and the U1 snRNA. Stimulates commitment or early (E) complex formation by stabilizing the base pairing of the 5' end of the U1 snRNA and the 5' splice-site region. The chain is U1 small nuclear ribonucleoprotein C from Pediculus humanus subsp. corporis (Body louse).